Consider the following 149-residue polypeptide: Large ribosomal subunit protein bL20m (149 aa).

The transit peptide at 1 to 9 directs the protein to the mitochondrion; that stretch reads MVFLTTRLW.

Belongs to the bacterial ribosomal protein bL20 family. As to quaternary structure, component of the mitochondrial ribosome large subunit (39S) which comprises a 16S rRNA and about 50 distinct proteins. Interacts with OXA1L.

Its subcellular location is the mitochondrion. In Mus musculus (Mouse), this protein is Large ribosomal subunit protein bL20m (Mrpl20).